Here is a 315-residue protein sequence, read N- to C-terminus: Methionyl-tRNA formyltransferase (315 aa).

The interval 2–189 (SESLRIIFAG…LITTLKQLAD (188 aa)) is N-terminal domain. 113-116 (SLLP) is a binding site for (6S)-5,6,7,8-tetrahydrofolate. Positions 210-315 (KEEARIDWSL…EWFVPGNRLV (106 aa)) are C-terminal domain.

It belongs to the Fmt family.

It carries out the reaction L-methionyl-tRNA(fMet) + (6R)-10-formyltetrahydrofolate = N-formyl-L-methionyl-tRNA(fMet) + (6S)-5,6,7,8-tetrahydrofolate + H(+). Its function is as follows. Attaches a formyl group to the free amino group of methionyl-tRNA(fMet). The formyl group appears to play a dual role in the initiator identity of N-formylmethionyl-tRNA by promoting its recognition by IF2 and preventing the misappropriation of this tRNA by the elongation apparatus. The polypeptide is Methionyl-tRNA formyltransferase (Escherichia coli O157:H7).